A 228-amino-acid polypeptide reads, in one-letter code: 6-carboxyhexanoate--CoA ligase (228 aa).

Belongs to the BioW family. Homodimer. Requires Mg(2+) as cofactor.

The catalysed reaction is heptanedioate + ATP + CoA = 6-carboxyhexanoyl-CoA + AMP + diphosphate. It participates in metabolic intermediate metabolism; pimeloyl-CoA biosynthesis; pimeloyl-CoA from pimelate: step 1/1. Catalyzes the transformation of pimelate into pimeloyl-CoA with concomitant hydrolysis of ATP to AMP. In Staphylococcus epidermidis (strain ATCC 35984 / DSM 28319 / BCRC 17069 / CCUG 31568 / BM 3577 / RP62A), this protein is 6-carboxyhexanoate--CoA ligase.